An 829-amino-acid chain; its full sequence is Periplasmic nitrate reductase (829 aa).

Positions Met1–Ala30 form a signal peptide, tat-type signal. The 4Fe-4S Mo/W bis-MGD-type domain maps to Ile41–Asp97. Positions 48, 51, 55, and 83 each coordinate [4Fe-4S] cluster. Residues Lys85, Gln152, Asn177, Cys181, Trp214–Met221, Ser245–His249, Gln264–Asp266, Met374, Gln378, Asn484, Ser510–Asp511, Lys533, Asp560, and Thr718–Thr727 contribute to the Mo-bis(molybdopterin guanine dinucleotide) site. Phe794 contacts substrate. 2 residues coordinate Mo-bis(molybdopterin guanine dinucleotide): Asn802 and Lys819.

It belongs to the prokaryotic molybdopterin-containing oxidoreductase family. NasA/NapA/NarB subfamily. In terms of assembly, component of the periplasmic nitrate reductase NapAB complex composed of NapA and NapB. Requires [4Fe-4S] cluster as cofactor. It depends on Mo-bis(molybdopterin guanine dinucleotide) as a cofactor. Post-translationally, predicted to be exported by the Tat system. The position of the signal peptide cleavage has not been experimentally proven.

Its subcellular location is the periplasm. It carries out the reaction 2 Fe(II)-[cytochrome] + nitrate + 2 H(+) = 2 Fe(III)-[cytochrome] + nitrite + H2O. Catalytic subunit of the periplasmic nitrate reductase complex NapAB. Receives electrons from NapB and catalyzes the reduction of nitrate to nitrite. In Vibrio vulnificus (strain YJ016), this protein is Periplasmic nitrate reductase.